Consider the following 281-residue polypeptide: 2,3,4,5-tetrahydropyridine-2,6-dicarboxylate N-succinyltransferase (281 aa).

Residues Arg-108 and Asp-145 each contribute to the substrate site.

Belongs to the transferase hexapeptide repeat family. As to quaternary structure, homotrimer.

The protein resides in the cytoplasm. The catalysed reaction is (S)-2,3,4,5-tetrahydrodipicolinate + succinyl-CoA + H2O = (S)-2-succinylamino-6-oxoheptanedioate + CoA. It participates in amino-acid biosynthesis; L-lysine biosynthesis via DAP pathway; LL-2,6-diaminopimelate from (S)-tetrahydrodipicolinate (succinylase route): step 1/3. In Nitrobacter hamburgensis (strain DSM 10229 / NCIMB 13809 / X14), this protein is 2,3,4,5-tetrahydropyridine-2,6-dicarboxylate N-succinyltransferase.